The following is a 1745-amino-acid chain: ADAMTS-like protein 1 (1745 aa).

An N-terminal signal peptide occupies residues 1 to 28; the sequence is MECCRRAAPGTPLLVLAFLLLSSRTARS. The TSP type-1 1 domain occupies 33-82; that stretch reads EGLWDAWGPWSECSRTCGGGASYSLRRCLSSKSCEGRNIRYRTCSNVDCP. Intrachain disulfides connect cysteine 45–cysteine 76, cysteine 49–cysteine 81, and cysteine 60–cysteine 66. Asparagine 251 is a glycosylation site (N-linked (GlcNAc...) asparagine). Serine 310 and serine 391 each carry an O-linked (Fuc...) serine glycan. 6 consecutive TSP type-1 domains span residues 376–424, 436–493, 522–584, 607–667, 703–762, and 763–825; these read PLPR…MYTP, DCPK…TPCY, EEPS…GPCN, ELYD…DPCP, CPPA…KKDD, and CPSE…ATCA. O-linked (Fuc...) threonine glycosylation is present at threonine 451. 3 disulfide bridges follow: cysteine 534/cysteine 578, cysteine 538/cysteine 583, and cysteine 549/cysteine 567. Cystine bridges form between cysteine 775–cysteine 819, cysteine 779–cysteine 824, cysteine 790–cysteine 807, and cysteine 874–cysteine 922. An Ig-like C2-type 1 domain is found at 836–938; sequence PHIAAARNIY…EQFVIKLIGG (103 aa). Disordered stretches follow at residues 966–991 and 1114–1137; these read EALQTHKHQNGIFSNGSKAEKRGLTA and VSGFSSSLRSSSGEAGGGSRRPHR. The span at 1115–1126 shows a compositional bias: low complexity; it reads SGFSSSLRSSSG. 3 consecutive Ig-like C2-type domains span residues 1139 to 1241, 1261 to 1352, and 1378 to 1468; these read PAIL…IAVT, PTVT…TQLL, and PSVL…ASLV. 3 disulfides stabilise this stretch: cysteine 1177–cysteine 1225, cysteine 1283–cysteine 1336, and cysteine 1401–cysteine 1452. TSP type-1 domains are found at residues 1528 to 1591 and 1649 to 1709; these read CPSR…QLCV and CSVH…TPCE. Positions 1709–1745 constitute a PLAC domain; that stretch reads ENTECRDTTRYCEKVRQLKLCQLGQFRSRCCGTCGKA.

In terms of assembly, monomer. In terms of processing, glycosylated. O-fucosylated by POFUT2 on a serine or a threonine residue found within the consensus sequence C1-X(2)-(S/T)-C2-G of the TSP type-1 repeat domains where C1 and C2 are the first and second cysteine residue of the repeat, respectively. Fucosylated repeats can then be further glycosylated by the addition of a beta-1,3-glucose residue by the glucosyltransferase, B3GALTL. Fucosylation mediates the efficient secretion of ADAMTS family members. Can also be C-glycosylated with one or two mannose molecules on tryptophan residues within the consensus sequence W-X-X-W of the TPRs, and N-glycosylated. These other glycosylations can also facilitate secretion. Disulfide bonds are present.

It localises to the secreted. The protein localises to the extracellular space. Its subcellular location is the extracellular matrix. The chain is ADAMTS-like protein 1 (Adamtsl1) from Mus musculus (Mouse).